We begin with the raw amino-acid sequence, 547 residues long: Glucose-6-phosphate isomerase 2 (547 aa).

Catalysis depends on glutamate 351, which acts as the Proton donor. Residues histidine 382 and lysine 508 contribute to the active site.

It belongs to the GPI family.

The protein resides in the cytoplasm. It carries out the reaction alpha-D-glucose 6-phosphate = beta-D-fructose 6-phosphate. It participates in carbohydrate biosynthesis; gluconeogenesis. The protein operates within carbohydrate degradation; glycolysis; D-glyceraldehyde 3-phosphate and glycerone phosphate from D-glucose: step 2/4. Its function is as follows. Catalyzes the reversible isomerization of glucose-6-phosphate to fructose-6-phosphate. The chain is Glucose-6-phosphate isomerase 2 from Neisseria gonorrhoeae (strain ATCC 700825 / FA 1090).